We begin with the raw amino-acid sequence, 271 residues long: 3-methyl-2-oxobutanoate hydroxymethyltransferase (271 aa).

Residues aspartate 53 and aspartate 92 each coordinate Mg(2+). Residues 53–54 (DS), aspartate 92, and lysine 120 each bind 3-methyl-2-oxobutanoate. Glutamate 122 contacts Mg(2+). Catalysis depends on glutamate 189, which acts as the Proton acceptor.

This sequence belongs to the PanB family. In terms of assembly, homodecamer; pentamer of dimers. It depends on Mg(2+) as a cofactor.

It localises to the cytoplasm. It carries out the reaction 3-methyl-2-oxobutanoate + (6R)-5,10-methylene-5,6,7,8-tetrahydrofolate + H2O = 2-dehydropantoate + (6S)-5,6,7,8-tetrahydrofolate. It participates in cofactor biosynthesis; (R)-pantothenate biosynthesis; (R)-pantoate from 3-methyl-2-oxobutanoate: step 1/2. Functionally, catalyzes the reversible reaction in which hydroxymethyl group from 5,10-methylenetetrahydrofolate is transferred onto alpha-ketoisovalerate to form ketopantoate. The polypeptide is 3-methyl-2-oxobutanoate hydroxymethyltransferase (Burkholderia multivorans (strain ATCC 17616 / 249)).